Here is a 181-residue protein sequence, read N- to C-terminus: MSIETLKERLPDYAKDLKLNLSSLANDITLSPQQLAGTFVASAIASRNADVTRAIVAEYESVLSPQALTAAKAAAAIMGLNNIYYRFVHMVEGDYAHMPARLRMNVIGRPGVEKLDFELWSLAVSAINGCGMCVESHEKVVREGGLSAEQVQTAVRVAATVHAVAATLDGAAALGDHPAAG.

Cysteine 130 acts as the Proton donor in catalysis. Cysteine 130 and cysteine 133 are oxidised to a cystine. Cysteine 133 serves as the catalytic Cysteine sulfenic acid (-SOH) intermediate.

It belongs to the AhpD family.

It catalyses the reaction N(6)-[(R)-dihydrolipoyl]-L-lysyl-[lipoyl-carrier protein] + a hydroperoxide = N(6)-[(R)-lipoyl]-L-lysyl-[lipoyl-carrier protein] + an alcohol + H2O. Antioxidant protein with alkyl hydroperoxidase activity. Required for the reduction of the AhpC active site cysteine residues and for the regeneration of the AhpC enzyme activity. The protein is Alkyl hydroperoxide reductase AhpD of Gluconacetobacter diazotrophicus (strain ATCC 49037 / DSM 5601 / CCUG 37298 / CIP 103539 / LMG 7603 / PAl5).